The following is a 1113-amino-acid chain: Nucleoporin NUP116/NSP116 (1113 aa).

The interval 1-35 is disordered; that stretch reads MFGVSRGAFPSATTQPFGSTGSTFGGQQQQQQPVA. 4 FG repeats span residues 2–3, 17–18, 24–25, and 40–41; these read FG. Positions 13–33 are enriched in low complexity; that stretch reads TTQPFGSTGSTFGGQQQQQQP. Residues 49–91 are disordered; the sequence is TQAPAFGNFGNQTSNSPFGMSGSTTANGTPFGQSQLTNNNASG. The GLFG 1; approximate repeat unit spans residues 55-58; sequence GNFG. FG repeat units lie at residues 66–67, 79–80, and 94–95; these read FG. Residues 92 to 172 are interaction with AFG2; sequence SIFGGMGNNT…AGRKFGTSQN (81 aa). The GLE2 binding sequence (GLEBS) stretch occupies residues 110–166; sequence VVPNSTAGTSIKPFTTFEEKDPTTGVINVFQSITCMPEYRNFSFEELRFQDYQAGRK. The tract at residues 160–362 is interaction with MEX67, not KAP95; it reads DYQAGRKFGT…AKPASGGLFG (203 aa). FG repeat units lie at residues 167–168 and 189–190; these read FG. The GLFG 2 repeat unit spans residues 205-208; that stretch reads GLFG. Residues 214–217 form a GLFG 3; approximate repeat; that stretch reads GMFG. The GLFG 4; approximate repeat unit spans residues 224-227; the sequence is GGFG. One copy of the GLFG 5 repeat lies at 235-238; that stretch reads GLFG. The stretch at 249 to 250 is one FG 10 repeat; that stretch reads FG. GLFG repeat units lie at residues 259 to 262, 276 to 279, and 288 to 291; these read GLFG. Over residues 265 to 279 the composition is skewed to low complexity; that stretch reads TNNPTNGTNNTGLFG. The disordered stretch occupies residues 265–341; that stretch reads TNNPTNGTNN…SNANANGGAF (77 aa). The segment covering 280–304 has biased composition (polar residues); it reads QQNSNTNGGLFGQQQNSFGANNVSN. One copy of the FG 11 repeat lies at 297-298; sequence FG. One copy of the GLFG 9; approximate repeat lies at 306-309; that stretch reads GAFG. The stretch at 327–330 is one GLFG 10; approximate repeat; it reads GIFG. The span at 330-341 shows a compositional bias: low complexity; the sequence is GQSNANANGGAF. A GLFG 11; approximate repeat occupies 339–342; that stretch reads GAFG. One copy of the FG 12 repeat lies at 351–352; that stretch reads FG. Residues 359–362 form a GLFG 12 repeat; that stretch reads GLFG. The interval 362-535 is sufficient for interaction with MEX67 and KAP95; sequence GQSAGSKAFG…GAKPTGFGNT (174 aa). An FG 13 repeat occupies 370 to 371; that stretch reads FG. Residues 371–606 are disordered; it reads GMNTNPTGTT…NPASTSGGLF (236 aa). GLFG repeat units lie at residues 382-385, 395-398, 407-410, and 420-423; these read GLFG. The segment covering 410 to 438 has biased composition (low complexity); it reads GQNNQSQNQSGLFGQQNSSNAFGQPQQQG. The FG 14 repeat unit spans residues 431-432; it reads FG. GLFG repeat units follow at residues 439-442 and 448-451; these read GLFG. The span at 451-464 shows a compositional bias: polar residues; it reads GQQQGASTFASGNA. Composition is skewed to low complexity over residues 465-478 and 485-522; these read QNNS…QQQQ and GQQN…QQNN. An FG 15 repeat occupies 470-471; it reads FG. 2 GLFG repeats span residues 482-485 and 497-500; these read GLFG. FG repeat units lie at residues 510-511, 525-526, and 532-533; these read FG. Positions 532-569 are enriched in polar residues; it reads FGNTSLFSNSTTNQSNGISGNNLQQQSGGLFQNKQQPA. The interaction with KAP95, not MEX67 stretch occupies residues 536 to 732; the sequence is SLFSNSTTNQ…QSQNALQQQQ (197 aa). GLFG repeat units lie at residues 572-575, 585-588, and 604-607; these read GLFG. Residues 588-603 show a composition bias toward polar residues; the sequence is GNNQVANQNNPASTSG. An FG 19 repeat occupies 616-617; sequence FG. One copy of the GLFG 24; approximate repeat lies at 630–633; it reads GIFG. 3 GLFG repeats span residues 648–651, 665–668, and 683–686; these read GLFG. Residues 678–691 show a composition bias toward low complexity; sequence SNGSTGLFGSNNTS. Disordered stretches follow at residues 678–736 and 868–939; these read SNGS…QQQR and SEEK…ENVA. Positions 692-708 are enriched in polar residues; sequence QSTNAGGLFQNNTSTNT. Positions 719–736 are enriched in low complexity; that stretch reads QSMAQSQNALQQQQQQQR. At Ser-886 the chain carries Phosphoserine. Basic and acidic residues predominate over residues 916-939; that stretch reads NDGEDSATKHHSRNMDEENKENVA. The region spanning 967–1109 is the Peptidase S59 domain; that stretch reads NENYYISPSL…GTYVFIVNHA (143 aa). Positions 967-1113 are interaction with NUP82 NPC subcomplex; the sequence is NENYYISPSL…FIVNHAAEQT (147 aa). The nucleoporin RNA-binding motif (NRM) stretch occupies residues 969–1108; sequence NYYISPSLDT…SGTYVFIVNH (140 aa).

The protein belongs to the nucleoporin GLFG family. As to quaternary structure, component of the nuclear pore complex (NPC). NPC constitutes the exclusive means of nucleocytoplasmic transport. NPCs allow the passive diffusion of ions and small molecules and the active, nuclear transport receptor-mediated bidirectional transport of macromolecules such as proteins, RNAs, ribonucleoparticles (RNPs), and ribosomal subunits across the nuclear envelope. Due to its 8-fold rotational symmetry, all subunits are present with 8 copies or multiples thereof. NUP116 interacts with the NUP82 subcomplex and GLE2. Through its FG repeats it interacts with numerous karyopherins including KAP95, PSE1 (GSP1-GDP dependent), MEX67, and to homomeric RNA. Interacts with CEX1. Interacts (via N-terminus) with AFG2 (via N-terminus).

It is found in the nucleus. It localises to the nuclear pore complex. Its subcellular location is the nucleus membrane. Functionally, functions as a component of the nuclear pore complex (NPC). NPC components, collectively referred to as nucleoporins (NUPs), can play the role of both NPC structural components and of docking or interaction partners for transiently associated nuclear transport factors. Active directional transport is assured by both, a Phe-Gly (FG) repeat affinity gradient for these transport factors across the NPC and a transport cofactor concentration gradient across the nuclear envelope (GSP1 and GSP2 GTPases associated predominantly with GTP in the nucleus, with GDP in the cytoplasm). Plays an important role in several nuclear export and import pathways including poly(A)+ RNA, tRNA, pre-ribosome, and protein transport. By binding ATPase AFG2, promotes AFG2-mediated release of shuttling protein RLP24 from pre-60S ribosomal particles. The chain is Nucleoporin NUP116/NSP116 (NUP116) from Saccharomyces cerevisiae (strain ATCC 204508 / S288c) (Baker's yeast).